Reading from the N-terminus, the 182-residue chain is D-lyxose ketol-isomerase (182 aa).

Mn(2+) is bound by residues His-74, His-76, Glu-87, and His-142.

This sequence belongs to the D-lyxose ketol-isomerase family. As to quaternary structure, homodimer. Mn(2+) serves as cofactor.

The enzyme catalyses D-lyxose = D-xylulose. Sugar isomerase that catalyzes the reversible isomerization of D-lyxose to D-xylulose. Shows weak activity with D-mannose and L-ribose. This is D-lyxose ketol-isomerase from Cohnella laeviribosi.